The primary structure comprises 158 residues: Protein-export protein SecB (158 aa).

It belongs to the SecB family. As to quaternary structure, homotetramer, a dimer of dimers. One homotetramer interacts with 1 SecA dimer.

The protein resides in the cytoplasm. One of the proteins required for the normal export of preproteins out of the cell cytoplasm. It is a molecular chaperone that binds to a subset of precursor proteins, maintaining them in a translocation-competent state. It also specifically binds to its receptor SecA. This chain is Protein-export protein SecB, found in Rhodopseudomonas palustris (strain HaA2).